The primary structure comprises 428 residues: Putative oxidoreductase YteT (428 aa).

A signal peptide spans 1–23; it reads MKNIVFCGLSSRAFSMFIKPLME.

It belongs to the Gfo/Idh/MocA family.

Its function is as follows. May play a role in the degradation of type I rhamnogalacturonan derived from plant cell walls. The polypeptide is Putative oxidoreductase YteT (yteT) (Bacillus subtilis (strain 168)).